The sequence spans 195 residues: CD70 antigen (195 aa).

At 1-23 (MPEEGRPCPWVRWSGTAFQRQWP) the chain is on the cytoplasmic side. A helical; Signal-anchor for type II membrane protein membrane pass occupies residues 24–44 (WLLLVVFITVFCCWFHCSGLL). Residues 45 to 195 (SKQQQRLLEH…TFFGVQWICP (151 aa)) are Extracellular-facing. One can recognise a THD domain in the interval 58–193 (HTAELQLNLT…DETFFGVQWI (136 aa)). N-linked (GlcNAc...) asparagine glycans are attached at residues Asn65 and Asn116. Cystine bridges form between Cys117-Cys153 and Cys135-Cys170. Asn172 is a glycosylation site (N-linked (GlcNAc...) asparagine).

This sequence belongs to the tumor necrosis factor family. In terms of assembly, homotrimer. In terms of processing, N-glycosylated. As to expression, very low level of expression. Detected in splenocytes and thymocytes.

It is found in the cell membrane. In terms of biological role, expressed at the plasma membrane of B cells, it is the ligand of the CD27 receptor which is specifically expressed at the surface of T cells. The CD70-CD27 signaling pathway mediates antigen-specific T cell activation and expansion which in turn provides immune surveillance of B cells. This chain is CD70 antigen, found in Mus musculus (Mouse).